The sequence spans 499 residues: Trichoplein keratin filament-binding protein (499 aa).

3 coiled-coil regions span residues 17–143 (LEQQ…LYEQ), 169–304 (EQIT…LSAL), and 405–485 (NRER…TQRG). Residues 260–426 (RKMEQCRKKT…RQFTSREKKQ (167 aa)) form a trichohyalin/plectin homology domain region.

This sequence belongs to the TCHP family.

It is found in the cytoplasm. Its subcellular location is the cytoskeleton. It localises to the microtubule organizing center. The protein resides in the centrosome. In terms of biological role, may act as a 'capping' or 'branching' protein for keratin filaments in the cell periphery. May regulate K8/K18 filament and desmosome organization mainly at the apical or peripheral regions of simple epithelial cells. In Xenopus laevis (African clawed frog), this protein is Trichoplein keratin filament-binding protein.